The chain runs to 214 residues: Large ribosomal subunit protein uL3 (214 aa).

The tract at residues 134 to 161 (THGNSLSHRAPGSIGQCQTPGRVMKGKK) is disordered. N5-methylglutamine is present on glutamine 151.

This sequence belongs to the universal ribosomal protein uL3 family. Part of the 50S ribosomal subunit. Forms a cluster with proteins L14 and L19. Post-translationally, methylated by PrmB.

One of the primary rRNA binding proteins, it binds directly near the 3'-end of the 23S rRNA, where it nucleates assembly of the 50S subunit. The sequence is that of Large ribosomal subunit protein uL3 from Teredinibacter turnerae (strain ATCC 39867 / T7901).